The sequence spans 253 residues: Cell division protein ZapD (253 aa).

It belongs to the ZapD family. Interacts with FtsZ.

The protein resides in the cytoplasm. Cell division factor that enhances FtsZ-ring assembly. Directly interacts with FtsZ and promotes bundling of FtsZ protofilaments, with a reduction in FtsZ GTPase activity. The sequence is that of Cell division protein ZapD from Bordetella bronchiseptica (strain ATCC BAA-588 / NCTC 13252 / RB50) (Alcaligenes bronchisepticus).